Consider the following 204-residue polypeptide: CDP-archaeol synthase (204 aa).

The next 6 helical transmembrane spans lie at 5–25 (VYACFLGLYFLVFSLIVYVIL), 43–63 (MLWVLPAYVANASPVVFSRLV), 91–111 (FEGFLGGMLSGVLVGILLAYA), 116–136 (GVSAFLLPLGALLGDLGGAFV), 147–167 (PAILLDQLDFVAGALILQGLF), and 175–195 (VVVAVVLLTPIVHLLTNMAAF).

Belongs to the CDP-archaeol synthase family. Requires Mg(2+) as cofactor.

It is found in the cell membrane. The enzyme catalyses 2,3-bis-O-(geranylgeranyl)-sn-glycerol 1-phosphate + CTP + H(+) = CDP-2,3-bis-O-(geranylgeranyl)-sn-glycerol + diphosphate. It functions in the pathway membrane lipid metabolism; glycerophospholipid metabolism. In terms of biological role, catalyzes the formation of CDP-2,3-bis-(O-geranylgeranyl)-sn-glycerol (CDP-archaeol) from 2,3-bis-(O-geranylgeranyl)-sn-glycerol 1-phosphate (DGGGP) and CTP. This reaction is the third ether-bond-formation step in the biosynthesis of archaeal membrane lipids. The chain is CDP-archaeol synthase from Thermofilum pendens (strain DSM 2475 / Hrk 5).